The primary structure comprises 314 residues: 4-hydroxy-3-methylbut-2-enyl diphosphate reductase (314 aa).

Cys-18 is a binding site for [4Fe-4S] cluster. The (2E)-4-hydroxy-3-methylbut-2-enyl diphosphate site is built by His-47 and His-80. Residues His-47 and His-80 each coordinate dimethylallyl diphosphate. The isopentenyl diphosphate site is built by His-47 and His-80. [4Fe-4S] cluster is bound at residue Cys-102. A (2E)-4-hydroxy-3-methylbut-2-enyl diphosphate-binding site is contributed by His-130. His-130 provides a ligand contact to dimethylallyl diphosphate. An isopentenyl diphosphate-binding site is contributed by His-130. The Proton donor role is filled by Glu-132. Thr-171 serves as a coordination point for (2E)-4-hydroxy-3-methylbut-2-enyl diphosphate. Cys-201 contributes to the [4Fe-4S] cluster binding site. Residues Ser-229, Ser-230, Asn-231, and Ser-273 each coordinate (2E)-4-hydroxy-3-methylbut-2-enyl diphosphate. Dimethylallyl diphosphate-binding residues include Ser-229, Ser-230, Asn-231, and Ser-273. 4 residues coordinate isopentenyl diphosphate: Ser-229, Ser-230, Asn-231, and Ser-273.

It belongs to the IspH family. [4Fe-4S] cluster is required as a cofactor.

The catalysed reaction is isopentenyl diphosphate + 2 oxidized [2Fe-2S]-[ferredoxin] + H2O = (2E)-4-hydroxy-3-methylbut-2-enyl diphosphate + 2 reduced [2Fe-2S]-[ferredoxin] + 2 H(+). The enzyme catalyses dimethylallyl diphosphate + 2 oxidized [2Fe-2S]-[ferredoxin] + H2O = (2E)-4-hydroxy-3-methylbut-2-enyl diphosphate + 2 reduced [2Fe-2S]-[ferredoxin] + 2 H(+). It functions in the pathway isoprenoid biosynthesis; dimethylallyl diphosphate biosynthesis; dimethylallyl diphosphate from (2E)-4-hydroxy-3-methylbutenyl diphosphate: step 1/1. Its pathway is isoprenoid biosynthesis; isopentenyl diphosphate biosynthesis via DXP pathway; isopentenyl diphosphate from 1-deoxy-D-xylulose 5-phosphate: step 6/6. In terms of biological role, catalyzes the conversion of 1-hydroxy-2-methyl-2-(E)-butenyl 4-diphosphate (HMBPP) into a mixture of isopentenyl diphosphate (IPP) and dimethylallyl diphosphate (DMAPP). Acts in the terminal step of the DOXP/MEP pathway for isoprenoid precursor biosynthesis. The protein is 4-hydroxy-3-methylbut-2-enyl diphosphate reductase of Phenylobacterium zucineum (strain HLK1).